We begin with the raw amino-acid sequence, 321 residues long: Taste receptor type 2 member 135 (321 aa).

At 1–28 (MGPIMSTGETSTAHTVLGCQITDKTVIT) the chain is on the extracellular side. The helical transmembrane segment at 29 to 49 (LFVILVFSCLVAVVGNGFIII) threads the bilayer. The Cytoplasmic portion of the chain corresponds to 50-75 (ALGMKWLLRRTLSAHNKLLISLAASR). A helical transmembrane segment spans residues 76 to 96 (FCLQCVVIGKNIYVFLNPSSF). Topologically, residues 97–106 (PYNPVIQLLN) are extracellular. The chain crosses the membrane as a helical span at residues 107–127 (LMWDFLTAATIWFCSLLGFFY). The Cytoplasmic segment spans residues 128-149 (CVKIATLTHPVFVWLKYRLPGW). The helical transmembrane segment at 150 to 170 (VPWMLLSAVGMSSLTSILCFI) threads the bilayer. The Extracellular segment spans residues 171 to 207 (GNHMIYQNYARRGHQPWNATGNSLRHSLEKFYFISIK). An N-linked (GlcNAc...) asparagine glycan is attached at N188. A helical transmembrane segment spans residues 208–228 (IIMWTVPTVIFSIFMSLLLVS). Over 229-253 (LVRHMKKTLLALSELRDVWAQAHFK) the chain is Cytoplasmic. Residues 254 to 274 (ALLPLLSFIILFISCFLTLVL) traverse the membrane as a helical segment. The Extracellular segment spans residues 275–286 (SSASSTPYQEFR). A helical membrane pass occupies residues 287–307 (YWMWQVVIHLCTVIHPIVILL). Topologically, residues 308 to 321 (SNPVLRVVMKRGCC) are cytoplasmic.

Belongs to the G-protein coupled receptor T2R family.

The protein localises to the membrane. In terms of biological role, putative taste receptor which may play a role in the perception of bitterness. In Rattus norvegicus (Rat), this protein is Taste receptor type 2 member 135.